The sequence spans 141 residues: Large ribosomal subunit protein uL11 (141 aa).

This sequence belongs to the universal ribosomal protein uL11 family. In terms of assembly, part of the ribosomal stalk of the 50S ribosomal subunit. Interacts with L10 and the large rRNA to form the base of the stalk. L10 forms an elongated spine to which L12 dimers bind in a sequential fashion forming a multimeric L10(L12)X complex. In terms of processing, one or more lysine residues are methylated.

Functionally, forms part of the ribosomal stalk which helps the ribosome interact with GTP-bound translation factors. The sequence is that of Large ribosomal subunit protein uL11 from Prosthecochloris aestuarii (strain DSM 271 / SK 413).